The chain runs to 108 residues: Parvalbumin beta (108 aa).

EF-hand domains lie at 38-73 (KPTD…FCSS) and 77-108 (LSNA…LVRS). Ca(2+) contacts are provided by aspartate 51, aspartate 53, serine 55, tyrosine 57, glutamate 59, glutamate 62, aspartate 90, aspartate 92, aspartate 94, lysine 96, and glutamate 101.

The protein belongs to the parvalbumin family.

In muscle, parvalbumin is thought to be involved in relaxation after contraction. It binds two calcium ions. The sequence is that of Parvalbumin beta from Amphiuma means (Salamander).